Consider the following 57-residue polypeptide: Large ribosomal subunit protein bL32 (57 aa).

Positions 1 to 16 (MAVQKSRKTRSKRGMR) are enriched in basic residues. The segment at 1–45 (MAVQKSRKTRSKRGMRRSHDALTAPAQLSVDATSGETHRRHHMTA) is disordered.

Belongs to the bacterial ribosomal protein bL32 family.

In Psychromonas ingrahamii (strain DSM 17664 / CCUG 51855 / 37), this protein is Large ribosomal subunit protein bL32.